A 383-amino-acid chain; its full sequence is 8-amino-7-oxononanoate synthase (383 aa).

Arg-21 contributes to the substrate binding site. Gly-108 to Tyr-109 provides a ligand contact to pyridoxal 5'-phosphate. His-133 provides a ligand contact to substrate. Pyridoxal 5'-phosphate-binding residues include Ser-179, His-207, and Thr-233. Lys-236 bears the N6-(pyridoxal phosphate)lysine mark. Thr-350 serves as a coordination point for substrate.

It belongs to the class-II pyridoxal-phosphate-dependent aminotransferase family. BioF subfamily. Homodimer. Pyridoxal 5'-phosphate is required as a cofactor.

The enzyme catalyses 6-carboxyhexanoyl-[ACP] + L-alanine + H(+) = (8S)-8-amino-7-oxononanoate + holo-[ACP] + CO2. It participates in cofactor biosynthesis; biotin biosynthesis. Functionally, catalyzes the decarboxylative condensation of pimeloyl-[acyl-carrier protein] and L-alanine to produce 8-amino-7-oxononanoate (AON), [acyl-carrier protein], and carbon dioxide. The sequence is that of 8-amino-7-oxononanoate synthase from Yersinia pseudotuberculosis serotype O:1b (strain IP 31758).